A 342-amino-acid polypeptide reads, in one-letter code: Holliday junction branch migration complex subunit RuvB (342 aa).

The tract at residues 1 to 184 (MEEDFNIRDH…FGINLHLEYY (184 aa)) is large ATPase domain (RuvB-L). Residues L23, R24, G65, K68, T69, T70, 131-133 (EDY), R174, Y184, and R221 contribute to the ATP site. Residue T69 coordinates Mg(2+). Residues 185-255 (DDDILSNIIS…IANYALEALN (71 aa)) are small ATPAse domain (RuvB-S). Residues 258-342 (KYGLDEIDNK…YNSQKTLFND (85 aa)) are head domain (RuvB-H). The DNA site is built by R313 and R318.

The protein belongs to the RuvB family. In terms of assembly, homohexamer. Forms an RuvA(8)-RuvB(12)-Holliday junction (HJ) complex. HJ DNA is sandwiched between 2 RuvA tetramers; dsDNA enters through RuvA and exits via RuvB. An RuvB hexamer assembles on each DNA strand where it exits the tetramer. Each RuvB hexamer is contacted by two RuvA subunits (via domain III) on 2 adjacent RuvB subunits; this complex drives branch migration. In the full resolvosome a probable DNA-RuvA(4)-RuvB(12)-RuvC(2) complex forms which resolves the HJ.

It localises to the cytoplasm. The catalysed reaction is ATP + H2O = ADP + phosphate + H(+). Functionally, the RuvA-RuvB-RuvC complex processes Holliday junction (HJ) DNA during genetic recombination and DNA repair, while the RuvA-RuvB complex plays an important role in the rescue of blocked DNA replication forks via replication fork reversal (RFR). RuvA specifically binds to HJ cruciform DNA, conferring on it an open structure. The RuvB hexamer acts as an ATP-dependent pump, pulling dsDNA into and through the RuvAB complex. RuvB forms 2 homohexamers on either side of HJ DNA bound by 1 or 2 RuvA tetramers; 4 subunits per hexamer contact DNA at a time. Coordinated motions by a converter formed by DNA-disengaged RuvB subunits stimulates ATP hydrolysis and nucleotide exchange. Immobilization of the converter enables RuvB to convert the ATP-contained energy into a lever motion, pulling 2 nucleotides of DNA out of the RuvA tetramer per ATP hydrolyzed, thus driving DNA branch migration. The RuvB motors rotate together with the DNA substrate, which together with the progressing nucleotide cycle form the mechanistic basis for DNA recombination by continuous HJ branch migration. Branch migration allows RuvC to scan DNA until it finds its consensus sequence, where it cleaves and resolves cruciform DNA. The polypeptide is Holliday junction branch migration complex subunit RuvB (Bacteroides fragilis (strain ATCC 25285 / DSM 2151 / CCUG 4856 / JCM 11019 / LMG 10263 / NCTC 9343 / Onslow / VPI 2553 / EN-2)).